The following is a 171-amino-acid chain: NADH-quinone oxidoreductase subunit B (171 aa).

[4Fe-4S] cluster-binding residues include Cys-39, Cys-40, Cys-105, and Cys-134.

This sequence belongs to the complex I 20 kDa subunit family. In terms of assembly, NDH-1 is composed of 14 different subunits. Subunits NuoB, C, D, E, F, and G constitute the peripheral sector of the complex. [4Fe-4S] cluster serves as cofactor.

The protein resides in the cell inner membrane. It carries out the reaction a quinone + NADH + 5 H(+)(in) = a quinol + NAD(+) + 4 H(+)(out). In terms of biological role, NDH-1 shuttles electrons from NADH, via FMN and iron-sulfur (Fe-S) centers, to quinones in the respiratory chain. The immediate electron acceptor for the enzyme in this species is believed to be ubiquinone. Couples the redox reaction to proton translocation (for every two electrons transferred, four hydrogen ions are translocated across the cytoplasmic membrane), and thus conserves the redox energy in a proton gradient. This Aliarcobacter butzleri (strain RM4018) (Arcobacter butzleri) protein is NADH-quinone oxidoreductase subunit B.